The primary structure comprises 451 residues: Gamma-aminobutyric acid receptor subunit alpha-2 (451 aa).

Residues 1–28 (MRTKLSTCNVWFPLLVLLVWNPARLVLA) form the signal peptide. The Extracellular segment spans residues 29 to 249 (NIQEDEAKNN…MTAHFHLKRK (221 aa)). Residue Asn-38 is glycosylated (N-linked (GlcNAc...) asparagine). A 4-aminobutanoate-binding site is contributed by Arg-94. N-linked (GlcNAc...) asparagine glycosylation is found at Asn-114 and Asn-138. Thr-157 contacts 4-aminobutanoate. A disulfide bridge connects residues Cys-166 and Cys-180. The next 3 helical transmembrane spans lie at 250–270 (IGYFVIQTYLPCIMTVILSQV), 281–300 (ARTVFGVTTVLTMTTLSISA), and 312–332 (AMDWFIAVCYAFVFSALIEFA). The Cytoplasmic portion of the chain corresponds to 333 to 420 (TVNYFTKRGW…FNSVSKIDRM (88 aa)). Positions 389-408 (KSATTPEPNKKPENKPAEAK) are disordered. A compositionally biased stretch (basic and acidic residues) spans 396–408 (PNKKPENKPAEAK). The helical transmembrane segment at 421–441 (SRIVFPVLFGTFNLVYWATYL) threads the bilayer. The Extracellular portion of the chain corresponds to 442–451 (NREPVLGVSP).

It belongs to the ligand-gated ion channel (TC 1.A.9) family. Gamma-aminobutyric acid receptor (TC 1.A.9.5) subfamily. GABRA2 sub-subfamily. Heteropentamer, formed by a combination of alpha (GABRA1-6), beta (GABRB1-3), gamma (GABRG1-3), delta (GABRD), epsilon (GABRE), rho (GABRR1-3), pi (GABRP) and theta (GABRQ) subunits, each subunit exhibiting distinct physiological and pharmacological properties. Binds UBQLN1. Interacts with KIF21B. Interacts with LHFPL4. Interacts with SHISA7; interaction leads to the regulation of GABA(A) receptor trafficking, channel deactivation kinetics and pharmacology. Post-translationally, glycosylated. Expressed in brain (at protein level).

Its subcellular location is the postsynaptic cell membrane. The protein resides in the cell membrane. It is found in the cytoplasmic vesicle membrane. The protein localises to the cell projection. It localises to the dendrite. The catalysed reaction is chloride(in) = chloride(out). Activated by pentobarbital. Inhibited by the antagonist bicuculline. Its function is as follows. Alpha subunit of the heteropentameric ligand-gated chloride channel gated by gamma-aminobutyric acid (GABA), a major inhibitory neurotransmitter in the brain. GABA-gated chloride channels, also named GABA(A) receptors (GABAAR), consist of five subunits arranged around a central pore and contain GABA active binding site(s) located at the alpha and beta subunit interface(s). When activated by GABA, GABAARs selectively allow the flow of chloride anions across the cell membrane down their electrochemical gradient. Chloride influx into the postsynaptic neuron following GABAAR opening decreases the neuron ability to generate a new action potential, thereby reducing nerve transmission. The alpha-2 subunit exhibits synaptogenic activity together with beta-2 and very little to no activity together with beta-3, the gamma-2 subunit being necessary but not sufficient to induce rapid synaptic contacts formation. The sequence is that of Gamma-aminobutyric acid receptor subunit alpha-2 from Rattus norvegicus (Rat).